The sequence spans 832 residues: Protein translocase subunit SecA (832 aa).

ATP-binding positions include Gln87, 105–109, and Asp512; that span reads GEGKT.

Belongs to the SecA family. Monomer and homodimer. Part of the essential Sec protein translocation apparatus which comprises SecA, SecYEG and auxiliary proteins SecDF-YajC and YidC.

It is found in the cell membrane. The protein resides in the cytoplasm. It carries out the reaction ATP + H2O + cellular proteinSide 1 = ADP + phosphate + cellular proteinSide 2.. Part of the Sec protein translocase complex. Interacts with the SecYEG preprotein conducting channel. Has a central role in coupling the hydrolysis of ATP to the transfer of proteins into and across the cell membrane, serving as an ATP-driven molecular motor driving the stepwise translocation of polypeptide chains across the membrane. In Wigglesworthia glossinidia brevipalpis, this protein is Protein translocase subunit SecA.